Reading from the N-terminus, the 207-residue chain is Thymidine kinase (207 aa).

Residues 15-22 (GCMFSGKS) and 88-91 (DEIQ) contribute to the ATP site. Glu89 acts as the Proton acceptor in catalysis. Residues Cys145, Cys148, Cys183, and His186 each contribute to the Zn(2+) site. Residues 184-198 (RHHHEVPGKPKKRYN) are compositionally biased toward basic residues. The disordered stretch occupies residues 184-207 (RHHHEVPGKPKKRYNHPLAGHTGE).

This sequence belongs to the thymidine kinase family. Homotetramer.

The protein localises to the cytoplasm. The enzyme catalyses thymidine + ATP = dTMP + ADP + H(+). The protein is Thymidine kinase of Geobacillus kaustophilus (strain HTA426).